Reading from the N-terminus, the 156-residue chain is RNA polymerase sigma factor SigS (156 aa).

Positions 29 to 44 (EYYQLLLIKMWQLSQI) match the Polymerase core binding motif. The H-T-H motif DNA-binding region spans 126–145 (QFEIAEIMSLSLSTIKLIKT).

The protein belongs to the sigma-70 factor family.

Its function is as follows. Sigma factors are initiation factors that promote the attachment of RNA polymerase to specific initiation sites and are then released. Sigma-S contributes to the protection against external stress, thus playing a role in cellular fitness and survival. This chain is RNA polymerase sigma factor SigS (sigS), found in Staphylococcus aureus (strain bovine RF122 / ET3-1).